We begin with the raw amino-acid sequence, 323 residues long: Calcium homeostasis modulator protein 2 (323 aa).

Topologically, residues M1 to V21 are cytoplasmic. Positions L14–F39 are central pore. Residues M22 to A43 form a helical membrane-spanning segment. At F44–R52 the chain is on the extracellular side. 2 cysteine pairs are disulfide-bonded: C46–C130 and C48–C162. Residues N53–N76 traverse the membrane as a helical segment. The Cytoplasmic segment spans residues N77–L101. Residues L102–L132 form a helical membrane-spanning segment. Residues S133–R179 lie on the Extracellular side of the membrane. The interval D145–H152 is hemichannel docking. A helical membrane pass occupies residues L180–K206. Over H207–A323 the chain is Cytoplasmic. Residues Y214–F251 are intersubunit interaction.

The protein belongs to the CALHM family. Homo-undecamer. Two undecameric hemichannels can assemble in a head-to-head manner to form a gap junction. In terms of tissue distribution, neuron, astrocyte, and microglia.

The protein resides in the cell membrane. It catalyses the reaction ATP(in) = ATP(out). Its activity is regulated as follows. Inhibited by divalent cations such as Co(2+) and Ni(2+). Functionally, pore-forming subunit of Ca(2+) homeostasis modulator channels. Mediates ATP release from astrocytes and ATP-induced Ca(2+) influx in microglia thus regulating neuronal ATP and Ca(2+) homeostasis, synaptic transmission and neuroinflammatory response. May form intercellular gap junctions. The gating mechanism remains unknown. This is Calcium homeostasis modulator protein 2 from Mus musculus (Mouse).